The primary structure comprises 591 residues: Parathyroid hormone/parathyroid hormone-related peptide receptor (591 aa).

The signal sequence occupies residues 1 to 26 (MGTARIAPSLALLLCCPVLSSAYALV). The Extracellular segment spans residues 27–188 (DADDVFTKEE…REREVFDRLG (162 aa)). Cystine bridges form between Cys-48/Cys-117, Cys-108/Cys-148, and Cys-131/Cys-170. The segment at 67–104 (KGWTPASTSGKPRKEKAPGKFYPESKENKDVPTGSRRR) is disordered. Residues 81 to 96 (EKAPGKFYPESKENKD) are compositionally biased toward basic and acidic residues. N-linked (GlcNAc...) asparagine glycans are attached at residues Asn-151, Asn-161, Asn-166, and Asn-176. The helical transmembrane segment at 189 to 212 (MIYTVGYSMSLASLTVAVLILAYF) threads the bilayer. Over 213–219 (RRLHCTR) the chain is Cytoplasmic. The helical transmembrane segment at 220–239 (NYIHMHMFLSFMLRAASIFV) threads the bilayer. The Extracellular portion of the chain corresponds to 240-282 (KDAVLYSGFTLDEAERLTEEELHIIAQVPPPPAAAAVGYAGCR). A helical membrane pass occupies residues 283–306 (VAVTFFLYFLATNYYWILVEGLYL). Residues 307-320 (HSLIFMAFFSEKKY) are Cytoplasmic-facing. A helical membrane pass occupies residues 321–342 (LWGFTIFGWGLPAVFVAVWVGV). At 343 to 361 (RATLANTGCWDLSSGHKKW) the chain is on the extracellular side. Residues 362–382 (IIQVPILASVVLNFILFINII) traverse the membrane as a helical segment. At 383–409 (RVLATKLRETNAGRCDTRQQYRKLLRS) the chain is on the cytoplasmic side. Residues 410–428 (TLVLVPLFGVHYTVFMALP) form a helical membrane-spanning segment. Residues 429-440 (YTEVSGTLWQIQ) lie on the Extracellular side of the membrane. Residues 441–463 (MHYEMLFNSFQGFFVAIIYCFCN) form a helical membrane-spanning segment. At 464-591 (GEVQAEIRKS…LLQEEWETVM (128 aa)) the chain is on the cytoplasmic side. The Important for interaction with G proteins signature appears at 474–477 (WSRW).

The protein belongs to the G-protein coupled receptor 2 family. Homodimer in the absence of bound ligand. Peptide hormone binding leads to dissociation of the homodimer. In terms of processing, N-glycosylated. Detected in kidney.

The protein resides in the cell membrane. Functionally, G-protein-coupled receptor for parathyroid hormone (PTH) and for parathyroid hormone-related peptide (PTHLH). Ligand binding causes a conformation change that triggers signaling via guanine nucleotide-binding proteins (G proteins) and modulates the activity of downstream effectors, such as adenylate cyclase (cAMP). PTH1R is coupled to G(s) G alpha proteins and mediates activation of adenylate cyclase activity. PTHLH dissociates from PTH1R more rapidly than PTH; as consequence, the cAMP response induced by PTHLH decays faster than the response induced by PTH. The polypeptide is Parathyroid hormone/parathyroid hormone-related peptide receptor (Pth1r) (Mus musculus (Mouse)).